We begin with the raw amino-acid sequence, 397 residues long: Tyrosine aminotransferase (397 aa).

Positions 34, 66, 131, and 184 each coordinate substrate. Residue Lys247 is modified to N6-(pyridoxal phosphate)lysine. Residue Arg375 participates in substrate binding.

It belongs to the class-I pyridoxal-phosphate-dependent aminotransferase family. In terms of assembly, homodimer. It depends on pyridoxal 5'-phosphate as a cofactor.

It catalyses the reaction L-tyrosine + 2-oxoglutarate = 3-(4-hydroxyphenyl)pyruvate + L-glutamate. It carries out the reaction 4-methylsulfanyl-2-oxobutanoate + L-tyrosine = 3-(4-hydroxyphenyl)pyruvate + L-methionine. The enzyme catalyses an aromatic L-alpha-amino acid + 2-oxoglutarate = an aromatic oxo-acid + L-glutamate. The catalysed reaction is L-aspartate + 2-oxoglutarate = oxaloacetate + L-glutamate. Its pathway is amino-acid biosynthesis; L-methionine biosynthesis via salvage pathway; L-methionine from S-methyl-5-thio-alpha-D-ribose 1-phosphate: step 6/6. Its activity is regulated as follows. Inhibited by malate and nitrotyrosine by approximately 20% at the higher concentration. At 100 uM, canaline and carboxymethoxylamine inhibit aminotransferase activity by 35 and 70%, respectively. Addition of 1.0 mM carboxymethoxylamine lead to a complete inhibition of the aminotransferase activity. Functionally, catalyzes the formation of methionine from 2-keto-4-methylthiobutyrate (KMTB) primarily using aromatic amino acids (tyrosine, phenylalanine and tryptophan) or glutamate as the amino donors. Histidine, leucine, asparagine, or arginine are also functional amino donors but to a lesser extent. Can also use alpha-ketoglutarate, oxaloacetate and pyruvate as the amino acceptors. In Klebsiella pneumoniae, this protein is Tyrosine aminotransferase (tyrB).